Reading from the N-terminus, the 161-residue chain is MEKEPMTLAGYNKVTAELDFLKKTERPETVIALDEARQLGDLKENAEYHSAKEKLKLIDIQIAELNAVISKAVIIDPTTLPHDRVSFGSTIDLVDVDTDEEFTYTIVGGVESSAEKGMISFNSPLAKQLMGKEAGDELNATLPGGAKTFEILKVYYKEISL.

A coiled-coil region spans residues 45 to 72 (NAEYHSAKEKLKLIDIQIAELNAVISKA).

It belongs to the GreA/GreB family.

Necessary for efficient RNA polymerase transcription elongation past template-encoded arresting sites. The arresting sites in DNA have the property of trapping a certain fraction of elongating RNA polymerases that pass through, resulting in locked ternary complexes. Cleavage of the nascent transcript by cleavage factors such as GreA or GreB allows the resumption of elongation from the new 3'terminus. GreA releases sequences of 2 to 3 nucleotides. In Aliarcobacter butzleri (strain RM4018) (Arcobacter butzleri), this protein is Transcription elongation factor GreA.